The following is a 246-amino-acid chain: DNA-directed RNA polymerase subunit alpha (246 aa).

The protein belongs to the RNA polymerase alpha chain family. In plastids the minimal PEP RNA polymerase catalytic core is composed of four subunits: alpha, beta, beta', and beta''. When a (nuclear-encoded) sigma factor is associated with the core the holoenzyme is formed, which can initiate transcription (Potential).

The protein localises to the plastid. It catalyses the reaction RNA(n) + a ribonucleoside 5'-triphosphate = RNA(n+1) + diphosphate. DNA-dependent RNA polymerase catalyzes the transcription of DNA into RNA using the four ribonucleoside triphosphates as substrates. In Helicosporidium sp. subsp. Simulium jonesii (Green alga), this protein is DNA-directed RNA polymerase subunit alpha (rpoA).